Consider the following 645-residue polypeptide: Leucine-rich repeat protein soc-2 homolog (645 aa).

The span at 1-19 (MNLCSSGATASTTSLSSTG) shows a compositional bias: low complexity. Disordered stretches follow at residues 1–67 (MNLC…AGGS) and 83–151 (NSPA…IQAD). 2 stretches are compositionally biased toward gly residues: residues 26–49 (GVPG…GGGS) and 88–97 (GAGGASGSTG). Over residues 98 to 107 (SGQQPTGSNG) the composition is skewed to low complexity. 20 LRR repeats span residues 165–186 (GIKR…VKEC), 188–209 (HLTE…IGCL), 211–232 (SLRN…LQNC), 234–255 (QLKV…IYRL), 257–278 (SLTT…LRQL), 280–301 (NLTM…IGAL), 303–324 (NLTT…IGNC), 326–347 (NLSA…IGNL), 349–371 (SLVR…KNCK), 372–393 (SMDE…MLAS), 396–417 (GLTT…GPAQ), 420–441 (NVYS…IFSR), 444–465 (GLTK…IGTW), 467–488 (NMVE…IMNL), 490–511 (NLEI…IGNL), 513–534 (RLRI…IGLL), 536–557 (ELQR…IGHL), 559–580 (NLTH…IGSL), 582–604 (SLEN…LALC), and 606–627 (NLKY…IQAG).

This sequence belongs to the SHOC2 family.

Its function is as follows. Acts as a Ras effector and participates in MAPK pathway activation. Probably acts as a regulatory subunit of protein phosphatase that specifically dephosphorylates Raf kinase and stimulate Raf activity at specialized signaling complexes upon Ras activation. The protein is Leucine-rich repeat protein soc-2 homolog (Sur-8) of Drosophila yakuba (Fruit fly).